We begin with the raw amino-acid sequence, 154 residues long: Interleukin-7 (154 aa).

An N-terminal signal peptide occupies residues 1–25 (MFHVSFRYIFGIPPLILVLLPVTSS). 3 disulfide bridges follow: Cys-27-Cys-145, Cys-58-Cys-133, and Cys-71-Cys-116. N-linked (GlcNAc...) asparagine glycosylation is found at Asn-94 and Asn-115.

The protein belongs to the IL-7/IL-9 family. As to quaternary structure, interacts with IL7R and CSF2RG. Three disulfide bonds are present.

It localises to the secreted. Functionally, hematopoietic cytokine that plays an essential role in the development, expansion, and survival of naive and memory T-cells and B-cells thereby regulating the number of mature lymphocytes and maintaining lymphoid homeostasis. Mechanistically, exerts its biological effects through a receptor composed of IL7RA subunit and the cytokine receptor common subunit gamma/CSF2RG. Binding to the receptor leads to activation of various kinases including JAK1 or JAK3 depending on the cell type and subsequently propagation of signals through activation of several downstream signaling pathways including the PI3K/Akt/mTOR or the JAK-STAT5. The sequence is that of Interleukin-7 (Il7) from Mus musculus (Mouse).